The chain runs to 115 residues: NADH-ubiquinone oxidoreductase chain 3 (115 aa).

The next 3 membrane-spanning stretches (helical) occupy residues 5–25 (LTFMTDVILALLLVMIAFWLP), 55–75 (FFLVAITFLLFDLEIALLLPL), and 86–106 (LMLTMALLLISILAAGLAYEW).

The protein belongs to the complex I subunit 3 family. In terms of assembly, core subunit of respiratory chain NADH dehydrogenase (Complex I) which is composed of 45 different subunits. Interacts with TMEM186. Interacts with TMEM242.

It localises to the mitochondrion inner membrane. The catalysed reaction is a ubiquinone + NADH + 5 H(+)(in) = a ubiquinol + NAD(+) + 4 H(+)(out). Functionally, core subunit of the mitochondrial membrane respiratory chain NADH dehydrogenase (Complex I) which catalyzes electron transfer from NADH through the respiratory chain, using ubiquinone as an electron acceptor. Essential for the catalytic activity of complex I. The chain is NADH-ubiquinone oxidoreductase chain 3 from Avahi unicolor (Sambirano woolly lemur).